The primary structure comprises 214 residues: Cytochrome b (214 aa).

Transmembrane regions (helical) follow at residues 31-51 (FGSM…FLAI), 75-96 (WTMQ…YIHI), 111-131 (WLSG…GYVL), and 176-196 (FFAL…AHIM). Residues His-81 and His-95 each contribute to the heme b site. The heme b site is built by His-180 and His-194. Residue His-199 coordinates a ubiquinone.

The protein belongs to the cytochrome b family. In terms of assembly, the cytochrome bc1 complex contains 3 respiratory subunits (MT-CYB, CYC1 and UQCRFS1), 2 core proteins (UQCRC1 and UQCRC2) and probably 6 low-molecular weight proteins. Heme b is required as a cofactor.

It is found in the mitochondrion inner membrane. Component of the ubiquinol-cytochrome c reductase complex (complex III or cytochrome b-c1 complex) that is part of the mitochondrial respiratory chain. The b-c1 complex mediates electron transfer from ubiquinol to cytochrome c. Contributes to the generation of a proton gradient across the mitochondrial membrane that is then used for ATP synthesis. This Elapsoidea semiannulata (Angolan garter snake) protein is Cytochrome b (MT-CYB).